Reading from the N-terminus, the 284-residue chain is Bifunctional protein FolD (284 aa).

NADP(+) contacts are provided by residues 165-167 and serine 190; that span reads GRS.

It belongs to the tetrahydrofolate dehydrogenase/cyclohydrolase family. Homodimer.

It catalyses the reaction (6R)-5,10-methylene-5,6,7,8-tetrahydrofolate + NADP(+) = (6R)-5,10-methenyltetrahydrofolate + NADPH. It carries out the reaction (6R)-5,10-methenyltetrahydrofolate + H2O = (6R)-10-formyltetrahydrofolate + H(+). Its pathway is one-carbon metabolism; tetrahydrofolate interconversion. Catalyzes the oxidation of 5,10-methylenetetrahydrofolate to 5,10-methenyltetrahydrofolate and then the hydrolysis of 5,10-methenyltetrahydrofolate to 10-formyltetrahydrofolate. The chain is Bifunctional protein FolD from Streptococcus pyogenes serotype M2 (strain MGAS10270).